The sequence spans 206 residues: Isochorismatase domain-containing protein 2A (206 aa).

Position 26 is an N6-succinyllysine (K26). Residues K93 and K178 each carry the N6-acetyllysine; alternate modification. N6-succinyllysine; alternate occurs at positions 93 and 178. K182 and K185 each carry N6-acetyllysine.

This sequence belongs to the isochorismatase family. In terms of assembly, interacts with CDKN2A. As to expression, ubiquitous. Expressed predominantly in uterus, stomach and urinary tract.

It is found in the cytoplasm. The protein resides in the nucleus. This is Isochorismatase domain-containing protein 2A from Mus musculus (Mouse).